Here is a 937-residue protein sequence, read N- to C-terminus: Protocadherin alpha-7 (937 aa).

An N-terminal signal peptide occupies residues 1–29 (MVNLRGYNWKSQQLLLFLIIVAAWEAGSG). Residues 30-697 (QLHYSVPEEA…RVDQRLVDVN (668 aa)) are Extracellular-facing. Cadherin domains lie at 34–133 (SVPE…PPMF), 157–242 (ASDA…APVF), 243–350 (DRSL…APQL), 351–455 (TVSS…APLF), 456–565 (AQPE…APTL), and 587–682 (PGQV…SSKV). A disulfide bond links C96 and C102. 2 O-linked (Man) threonine glycosylation sites follow: T223 and T225. N-linked (GlcNAc...) asparagine glycans are attached at residues N257 and N265. T438 carries an O-linked (Man) threonine glycan. S478 carries an O-linked (Man) serine glycan. N-linked (GlcNAc...) asparagine glycosylation occurs at N548. Residues 698 to 718 (VYLIIAICAVSSLLVLTLLLY) traverse the membrane as a helical segment. The Cytoplasmic segment spans residues 719 to 937 (TALRCSATPT…GNSTTDNSDQ (219 aa)). Disordered regions lie at residues 755–794 (RQRV…PDWR) and 816–843 (RAGP…EVSP). 5 PXXP repeats span residues 774-777 (PSLP), 786-789 (PRQP), 819-822 (PGGP), 860-863 (PGNP), and 878-881 (PGSP). Positions 774–881 (PSLPQGPSST…PDKFIIPGSP (108 aa)) are 5 X 4 AA repeats of P-X-X-P. The span at 775–787 (SLPQGPSSTDNPR) shows a compositional bias: polar residues. The segment at 887–937 (RQEPANNQIDKSDFITFGKKEETKKKKKKKKGNKTQEKKEKGNSTTDNSDQ) is disordered. Over residues 896–910 (DKSDFITFGKKEETK) the composition is skewed to basic and acidic residues.

As to quaternary structure, forms homodimers in trans (molecules expressed by two different cells). Forms promiscuous heterodimers in cis (at the plasma membrane of the same cell) with other protocadherins.

The protein localises to the cell membrane. In terms of biological role, calcium-dependent cell-adhesion protein involved in cells self-recognition and non-self discrimination. Thereby, it is involved in the establishment and maintenance of specific neuronal connections in the brain. The polypeptide is Protocadherin alpha-7 (Mus musculus (Mouse)).